A 356-amino-acid chain; its full sequence is Tyrosine recombinase XerS (356 aa).

A Core-binding (CB) domain is found at 16–121; sequence LMPWYVLEYY…ALSSLYKYLT (106 aa). In terms of domain architecture, Tyr recombinase spans 169–354; that stretch reads GFLTYIDQEH…VNDEQKNALD (186 aa). Catalysis depends on residues arginine 210, lysine 234, histidine 306, arginine 309, and histidine 332. Tyrosine 341 (O-(3'-phospho-DNA)-tyrosine intermediate) is an active-site residue.

It belongs to the 'phage' integrase family. XerS subfamily.

It is found in the cytoplasm. FtsK is required for recombination. In terms of biological role, site-specific tyrosine recombinase, which acts by catalyzing the cutting and rejoining of the recombining DNA molecules. Essential to convert dimers of the bacterial chromosome into monomers to permit their segregation at cell division. This chain is Tyrosine recombinase XerS, found in Streptococcus pneumoniae serotype 19F (strain G54).